The chain runs to 156 residues: Endoribonuclease YbeY (156 aa).

Zn(2+) contacts are provided by His-119, His-123, and His-129.

It belongs to the endoribonuclease YbeY family. It depends on Zn(2+) as a cofactor.

It localises to the cytoplasm. Single strand-specific metallo-endoribonuclease involved in late-stage 70S ribosome quality control and in maturation of the 3' terminus of the 16S rRNA. The protein is Endoribonuclease YbeY of Buchnera aphidicola subsp. Cinara cedri (strain Cc).